The following is a 499-amino-acid chain: Ent-kaurenoic acid oxidase 1 (499 aa).

A helical transmembrane segment spans residues 5-25 (AWWAVAAVVAALAVVALDAAV). Cysteine 443 is a heme binding site.

The protein belongs to the cytochrome P450 family. The cofactor is heme.

It is found in the endoplasmic reticulum membrane. It catalyses the reaction ent-kaur-16-en-19-oate + 3 reduced [NADPH--hemoprotein reductase] + 3 O2 = gibberellin A12 + 3 oxidized [NADPH--hemoprotein reductase] + 4 H2O + 4 H(+). It carries out the reaction ent-kaur-16-en-19-oate + reduced [NADPH--hemoprotein reductase] + O2 = ent-7alpha-hydroxykaur-16-en-19-oate + oxidized [NADPH--hemoprotein reductase] + H2O + H(+). The enzyme catalyses ent-7alpha-hydroxykaur-16-en-19-oate + reduced [NADPH--hemoprotein reductase] + O2 = gibberellin A12 aldehyde + oxidized [NADPH--hemoprotein reductase] + 2 H2O + H(+). The catalysed reaction is gibberellin A12 aldehyde + reduced [NADPH--hemoprotein reductase] + O2 = gibberellin A12 + oxidized [NADPH--hemoprotein reductase] + H2O + 2 H(+). The protein operates within plant hormone biosynthesis; gibberellin biosynthesis. Its function is as follows. Catalyzes three successive oxidations of ent-kaurenoic acid giving gibberellin 12 (GA12), a key step in gibberellins (GAs) biosynthesis. GAs, which are involved many processes, including stem elongation, play a central role in plant development. The sequence is that of Ent-kaurenoic acid oxidase 1 from Hordeum vulgare (Barley).